The following is a 236-amino-acid chain: uncharacterized protein (236 aa).

Positions 217–236 (GESPDNVVRGEGGFGSTGGH) are disordered. Gly residues predominate over residues 226-236 (GEGGFGSTGGH).

This is an uncharacterized protein from Ostreid herpesvirus 1 (isolate France) (OsHV-1).